The sequence spans 201 residues: 3-isopropylmalate dehydratase small subunit (201 aa).

It belongs to the LeuD family. LeuD type 1 subfamily. Heterodimer of LeuC and LeuD.

The enzyme catalyses (2R,3S)-3-isopropylmalate = (2S)-2-isopropylmalate. The protein operates within amino-acid biosynthesis; L-leucine biosynthesis; L-leucine from 3-methyl-2-oxobutanoate: step 2/4. Functionally, catalyzes the isomerization between 2-isopropylmalate and 3-isopropylmalate, via the formation of 2-isopropylmaleate. In Shewanella pealeana (strain ATCC 700345 / ANG-SQ1), this protein is 3-isopropylmalate dehydratase small subunit.